A 433-amino-acid chain; its full sequence is D-amino acid dehydrogenase (433 aa).

3-17 (VLVLGSGVIGTTSAY) provides a ligand contact to FAD.

Belongs to the DadA oxidoreductase family. Requires FAD as cofactor.

The enzyme catalyses a D-alpha-amino acid + A + H2O = a 2-oxocarboxylate + AH2 + NH4(+). Functionally, oxidative deamination of D-amino acids. This Pseudomonas syringae pv. tomato (strain ATCC BAA-871 / DC3000) protein is D-amino acid dehydrogenase.